The sequence spans 224 residues: MTARIGVVTFPGTLDDVDAARAARQVGAEVVSLWHADADLKGVDAVVVPGGFSYGDYLRAGAIARFAPVMDEVVAAADRGMPVLGICNGFQVLCEAGLLPGALTRNVGLHFICRDVWLRVASTSTAWTSRFEPDADLLVPLKSGEGRYVAPEKVLDELEGEGRVVFRYHDNVNGSLRDIAGICSANGRVVGLMPHPEHAIEALTGPSDDGLGLFYSALDAVLTG.

The 221-residue stretch at 4–224 (RIGVVTFPGT…YSALDAVLTG (221 aa)) folds into the Glutamine amidotransferase type-1 domain. Residue C87 is the Nucleophile of the active site. Catalysis depends on residues H195 and E197.

Part of the FGAM synthase complex composed of 1 PurL, 1 PurQ and 2 PurS subunits.

Its subcellular location is the cytoplasm. It carries out the reaction N(2)-formyl-N(1)-(5-phospho-beta-D-ribosyl)glycinamide + L-glutamine + ATP + H2O = 2-formamido-N(1)-(5-O-phospho-beta-D-ribosyl)acetamidine + L-glutamate + ADP + phosphate + H(+). The catalysed reaction is L-glutamine + H2O = L-glutamate + NH4(+). Its pathway is purine metabolism; IMP biosynthesis via de novo pathway; 5-amino-1-(5-phospho-D-ribosyl)imidazole from N(2)-formyl-N(1)-(5-phospho-D-ribosyl)glycinamide: step 1/2. Part of the phosphoribosylformylglycinamidine synthase complex involved in the purines biosynthetic pathway. Catalyzes the ATP-dependent conversion of formylglycinamide ribonucleotide (FGAR) and glutamine to yield formylglycinamidine ribonucleotide (FGAM) and glutamate. The FGAM synthase complex is composed of three subunits. PurQ produces an ammonia molecule by converting glutamine to glutamate. PurL transfers the ammonia molecule to FGAR to form FGAM in an ATP-dependent manner. PurS interacts with PurQ and PurL and is thought to assist in the transfer of the ammonia molecule from PurQ to PurL. The sequence is that of Phosphoribosylformylglycinamidine synthase subunit PurQ from Mycobacterium bovis (strain ATCC BAA-935 / AF2122/97).